Reading from the N-terminus, the 48-residue chain is uncharacterized protein (48 aa).

A disordered region spans residues 1–30 (MLGRTKLGNRNAQANNNAKKKNGFQTHFDS).

This is an uncharacterized protein from Bacillus subtilis (strain 168).